We begin with the raw amino-acid sequence, 448 residues long: MMLYISAKKAQVAFILYIVLVLRIISGNNDFCKPSSLNSEISGFIGYKCNFSNEGVHNLKPDMRERRSIFCTIHSYFIYDKIRLIIPKKSSSPEFKILPEKCFQKVYTDYENRVETDISELGLIEYEIEENDTNPNYNERTITISPFSPKDIEFFCFCDNTEKVISSIEGRSAMVHVRVLKYPHNILFTNLTNDLFTYLPKTYNESNFVSNVLEVELNDGELFVLACELINKKCFQEGKEKALYKSNKIIYHKNLTIFKAPFYVTSKDVNTECTCKFKNNNYKIVLKPKYEKKVIHGCNFSSNVSSKHTFTDSLDISLVDDSAHISCNVHLSEPKYNHLVGLNCPGDIIPDCFFQVYQPESEELEPSNIVYLDSQINIGDIEYYEDAEGDDKIKLFGIVGSIPKTTSFTCICKKDKKSAYMTVTIDSAYYGFLAKTFIFLIVAILLYI.

The first 27 residues, 1–27, serve as a signal peptide directing secretion; that stretch reads MMLYISAKKAQVAFILYIVLVLRIISG. The region spanning 45 to 182 is the 6-Cys 1 domain; it reads IGYKCNFSNE…AMVHVRVLKY (138 aa). 2 disulfide bridges follow: Cys49/Cys71 and Cys102/Cys156. Asn50, Asn131, Asn190, Asn204, Asn254, Asn299, and Asn303 each carry an N-linked (GlcNAc...) asparagine glycan. In terms of domain architecture, 6-Cys 2 spans 294 to 426; that stretch reads VIHGCNFSSN…KSAYMTVTID (133 aa). Intrachain disulfides connect Cys298/Cys327, Cys344/Cys412, and Cys352/Cys410. The GPI-anchor amidated aspartate moiety is linked to residue Asp426. A propeptide spans 427–448 (removed in mature form); the sequence is SAYYGFLAKTFIFLIVAILLYI.

Heterodimer; heterodimerizes with PF230.

The protein resides in the cell surface. Its subcellular location is the cell membrane. In terms of biological role, gametocyte surface protein required for male fertility. The chain is Gametocyte surface protein P45/48 (PF45/48) from Plasmodium falciparum (isolate 3D7).